The chain runs to 1077 residues: Semaphorin-5A (1077 aa).

An N-terminal signal peptide occupies residues methionine 1–arginine 21. The Extracellular segment spans residues proline 22 to methionine 971. One can recognise a Sema domain in the interval histidine 35–leucine 484. Cystine bridges form between cysteine 104-cysteine 114 and cysteine 131-cysteine 140. Residues asparagine 147, asparagine 168, asparagine 227, and asparagine 277 are each glycosylated (N-linked (GlcNAc...) asparagine). 2 disulfide bridges follow: cysteine 254–cysteine 357 and cysteine 278–cysteine 320. N-linked (GlcNAc...) asparagine glycans are attached at residues asparagine 323 and asparagine 367. Intrachain disulfides connect cysteine 487-cysteine 504 and cysteine 496-cysteine 513. N-linked (GlcNAc...) asparagine glycans are attached at residues asparagine 536 and asparagine 591. TSP type-1 domains are found at residues aspartate 540–serine 593, asparagine 595–proline 651, histidine 653–proline 702, threonine 707–threonine 765, asparagine 784–proline 839, aspartate 841–proline 896, and glutamate 897–serine 944. Cystine bridges form between cysteine 607–cysteine 644, cysteine 611–cysteine 650, cysteine 622–cysteine 634, cysteine 665–cysteine 696, cysteine 669–cysteine 701, and cysteine 680–cysteine 686. N-linked (GlcNAc...) asparagine glycosylation occurs at asparagine 717. 6 disulfides stabilise this stretch: cysteine 796-cysteine 833, cysteine 800-cysteine 838, cysteine 811-cysteine 823, cysteine 853-cysteine 890, cysteine 857-cysteine 895, and cysteine 868-cysteine 880. Asparagine 933 is a glycosylation site (N-linked (GlcNAc...) asparagine). A helical transmembrane segment spans residues phenylalanine 972 to valine 992. The Cytoplasmic segment spans residues tyrosine 993–tyrosine 1077.

Belongs to the semaphorin family. As to quaternary structure, binds PLXNB3. As to expression, in adult, detected in liver, brain, kidney, heart, lung and spleen.

Its subcellular location is the membrane. Functionally, bifunctional axonal guidance cue regulated by sulfated proteoglycans; attractive effects result from interactions with heparan sulfate proteoglycans (HSPGs), while the inhibitory effects depend on interactions with chondroitin sulfate proteoglycans (CSPGs). Ligand for receptor PLXNB3. In glioma cells, SEMA5A stimulation of PLXNB3 results in the disassembly of F-actin stress fibers, disruption of focal adhesions and cellular collapse as well as inhibition of cell migration and invasion through ARHGDIA-mediated inactivation of RAC1. May promote angiogenesis by increasing endothelial cell proliferation and migration and inhibiting apoptosis. The chain is Semaphorin-5A (Sema5a) from Mus musculus (Mouse).